The primary structure comprises 277 residues: Shikimate dehydrogenase (NADP(+)) (277 aa).

Residues 15 to 17 (SLS) and T62 contribute to the shikimate site. Catalysis depends on K66, which acts as the Proton acceptor. Residues N87 and D102 each contribute to the shikimate site. Residues 127–131 (GAGGA) and I219 each bind NADP(+). Y221 contributes to the shikimate binding site. An NADP(+)-binding site is contributed by G242.

This sequence belongs to the shikimate dehydrogenase family. Homodimer.

It carries out the reaction shikimate + NADP(+) = 3-dehydroshikimate + NADPH + H(+). Its pathway is metabolic intermediate biosynthesis; chorismate biosynthesis; chorismate from D-erythrose 4-phosphate and phosphoenolpyruvate: step 4/7. Its function is as follows. Involved in the biosynthesis of the chorismate, which leads to the biosynthesis of aromatic amino acids. Catalyzes the reversible NADPH linked reduction of 3-dehydroshikimate (DHSA) to yield shikimate (SA). The polypeptide is Shikimate dehydrogenase (NADP(+)) (Bacillus cytotoxicus (strain DSM 22905 / CIP 110041 / 391-98 / NVH 391-98)).